We begin with the raw amino-acid sequence, 624 residues long: Actin-related protein 8 (624 aa).

At Met1 the chain carries N-acetylmethionine. Basic and acidic residues predominate over residues 1–25 (MTQAEKGDTENGKEKGGEKEKEQRG). A disordered region spans residues 1-29 (MTQAEKGDTENGKEKGGEKEKEQRGVKRP). Residues Ser55 and Thr56 each contribute to the ATP site. Ser132 is modified (phosphoserine). 283-286 (DVGD) contributes to the ATP binding site. Ser412 is modified (phosphoserine). The segment at 430-462 (SKQEQSAKATADRKSASKPIGFEGDLRGQSSDL) is disordered.

The protein belongs to the actin family. ARP8 subfamily. In terms of assembly, component of the chromatin remodeling INO80 complex; specifically part of a complex module associated with the DBINO domain of INO80. Exists as monomers and dimers, but the dimer is most probably the biologically relevant form required for stable interactions with histones that exploits the twofold symmetry of the nucleosome core.

The protein localises to the nucleus. The protein resides in the chromosome. In terms of biological role, plays an important role in the functional organization of mitotic chromosomes. Exhibits low basal ATPase activity, and unable to polymerize. Proposed core component of the chromatin remodeling INO80 complex which is involved in transcriptional regulation, DNA replication and probably DNA repair. Required for the recruitment of INO80 (and probably the INO80 complex) to sites of DNA damage Strongly prefer nucleosomes and H3-H4 tetramers over H2A-H2B dimers, suggesting it may act as a nucleosome recognition module within the complex. This chain is Actin-related protein 8 (ACTR8), found in Pongo abelii (Sumatran orangutan).